A 284-amino-acid polypeptide reads, in one-letter code: Plastid-lipid-associated protein 6, chloroplastic (284 aa).

Residues 1-11 (MATSSTFSSLL) are compositionally biased toward low complexity. The disordered stretch occupies residues 1-47 (MATSSTFSSLLPSPPALLSDHRSPPPSIRYSFSPLTTPKSSRLGFTV). Residues 1–72 (MATSSTFSSL…SIGGESDPPP (72 aa)) constitute a chloroplast transit peptide. Phosphoserine occurs at positions 96, 105, 148, 151, and 155.

It belongs to the PAP/fibrillin family. In terms of assembly, part of the Photosystem II light-harvesting complex (LHCII). Post-translationally, phosphorylated as part of a basal defense response.

The protein localises to the plastid. The protein resides in the chloroplast. Its subcellular location is the plastoglobule. In terms of biological role, required for plastoglobule development and resistance to multiple stresses. Regulates plastoglobule osmiophilic content. May be involved in the transport of lipophilic antioxidants in and out of the plastoglobule. The protein is Plastid-lipid-associated protein 6, chloroplastic of Arabidopsis thaliana (Mouse-ear cress).